The chain runs to 43 residues: Protein PsbN (43 aa).

The chain crosses the membrane as a helical span at residues 7–27 (IAIFISGLLVSFTGYALYTAF).

Belongs to the PsbN family.

The protein resides in the plastid. The protein localises to the chloroplast thylakoid membrane. May play a role in photosystem I and II biogenesis. The sequence is that of Protein PsbN from Suaeda maritima (Annual sea blite).